Consider the following 69-residue polypeptide: Large ribosomal subunit protein bL31 (69 aa).

Belongs to the bacterial ribosomal protein bL31 family. Type A subfamily. In terms of assembly, part of the 50S ribosomal subunit.

Its function is as follows. Binds the 23S rRNA. This chain is Large ribosomal subunit protein bL31, found in Mycoplasmopsis pulmonis (strain UAB CTIP) (Mycoplasma pulmonis).